The chain runs to 562 residues: Formate--tetrahydrofolate ligase (562 aa).

70 to 77 (TPAGEGKS) provides a ligand contact to ATP.

It belongs to the formate--tetrahydrofolate ligase family.

The enzyme catalyses (6S)-5,6,7,8-tetrahydrofolate + formate + ATP = (6R)-10-formyltetrahydrofolate + ADP + phosphate. It participates in one-carbon metabolism; tetrahydrofolate interconversion. This Paenarthrobacter aurescens (strain TC1) protein is Formate--tetrahydrofolate ligase.